The chain runs to 163 residues: Nucleotide-binding protein Clos_1967 (163 aa).

The protein belongs to the YajQ family.

Its function is as follows. Nucleotide-binding protein. This is Nucleotide-binding protein Clos_1967 from Alkaliphilus oremlandii (strain OhILAs) (Clostridium oremlandii (strain OhILAs)).